The chain runs to 328 residues: Mitochondrial GTPase 1 (328 aa).

Positions 23–211 (NKTLKRLKNL…MLDTPGIMTP (189 aa)) constitute a CP-type G domain. Residues 70 to 73 (NKCD), 155 to 160 (NTGKSS), and glycine 207 contribute to the GTP site.

The protein belongs to the TRAFAC class YlqF/YawG GTPase family. MTG1 subfamily.

It is found in the mitochondrion inner membrane. Functionally, mitochondrial GTPase involved in assembly of the large ribosomal subunit. Plays a role in expression of the mitochondrial translational machinery. The sequence is that of Mitochondrial GTPase 1 (mtg1) from Schizosaccharomyces pombe (strain 972 / ATCC 24843) (Fission yeast).